The sequence spans 163 residues: Single-stranded DNA-binding protein 1 (163 aa).

Residues 1–104 enclose the SSB domain; sequence MINNVVLVGR…VVAESFQLLE (104 aa). The disordered stretch occupies residues 106–163; sequence RATREGGSPNSYNNGGYNNAPSNNSYSASSQQTPNFSRDESPFGNSNPMDISDDDLPF. Residues 111–135 show a composition bias toward low complexity; the sequence is GGSPNSYNNGGYNNAPSNNSYSASS. The short motif at 158–163 is the Important for interaction with partner proteins element; sequence DDDLPF.

As to quaternary structure, homotetramer.

Plays an important role in DNA replication, recombination and repair. Binds to ssDNA and to an array of partner proteins to recruit them to their sites of action during DNA metabolism. The chain is Single-stranded DNA-binding protein 1 (ssb1) from Streptococcus agalactiae serotype III (strain NEM316).